The following is a 524-amino-acid chain: Cytochrome P450 6k1 (524 aa).

Cysteine 464 is a binding site for heme.

The protein belongs to the cytochrome P450 family. Heme serves as cofactor.

The protein localises to the endoplasmic reticulum membrane. It localises to the microsome membrane. The chain is Cytochrome P450 6k1 (CYP6K1) from Blattella germanica (German cockroach).